The sequence spans 171 residues: Endoribonuclease ToxN (171 aa).

This sequence belongs to the ToxN/AbiQ toxin family. One ToxN monomer binds to a 36-nt-long single repeat of the ToxI RNA; this complex forms a triangular heterohexameric complex with ToxN connected by the ToxI RNA to another toxin molecule. The ToxI repeat forms a pseudoknot which occludes the toxin active site. Interaction of ToxI with ToxN partially inhibits the latter's endoribonuclease activity in vitro. The complex self-assembles in vitro with either full-length or processed single repeats; during the process the precursor is processed.

Functionally, toxic component of a type III toxin-antitoxin (TA) system. An endoribonuclease which is active independently of the ribosome, cleaving between the second and third A of AAA(U/G) sequences, although not all occurrences of this tetranucleotide are cleaved. Digests many mRNA species, including its own transcript and its cognate antitoxin RNA ToxI. ToxI has 5.5 nearly identical 36 nucleotide-long repeats (a single repeat neutralizes the toxin in vivo); a single repeat folds into a pseudoknot which binds the toxin. The ToxI precursor RNA is a preferential target in vivo and is progressively degraded to single repeat lengths as ToxN-ToxI complex self-assembly occurs. In vivo expression of ToxI antitoxin inhibits endonuclease activity of ToxN. The toxin alone inhibits growth when expressed in E.coli without causing cell lysis; this bacteriostatic effect is neutralized by cognate RNA antitoxin ToxI. Non-cognate antitoxin RNA from B.thuringiensis does not inhibit this toxin. The RNA antitoxin is less stable than the proteinaceous toxin; synthesis of ToxI in the absence of new ToxN synthesis restores growth and also detectable accumulation of the ToxN protein. Negatively regulates its own operon in complex with ToxI. The toxin-antitoxin system functions in plasmid maintenance (a plasmid addiction system). Its function is as follows. The TA system protects P.atrosepticum strain 1043 against phage phiM1 and phiA2, E.coli against some but not all coliphages and S.marcescens against some bacteriophages, causing an abortive infection (Abi phenotype). Also protects P.atrosepticum strain 1043 against phage phiTE; phage that escape Abi and grow in this bacterium have evolved a pseudo-ToxI RNA by expanding a pre-existing sequence similar to the bona fide ToxI repeats. This Pectobacterium atrosepticum (Erwinia carotovora subsp. atroseptica) protein is Endoribonuclease ToxN.